The chain runs to 364 residues: Pre-mRNA-splicing factor SLT11 (364 aa).

The interval 331–364 (KSTDNAKNDKKKTSKKVHKDRSKKSKPRANKLTI) is disordered. Residues 339–364 (DKKKTSKKVHKDRSKKSKPRANKLTI) show a composition bias toward basic residues.

This sequence belongs to the SLT11 family. In terms of assembly, belongs to the CWC complex (or CEF1-associated complex), a spliceosome subcomplex composed of the U2, U5 and U6 snRNAs and at least BUD13, BUD31, BRR2, CDC40, CEF1, CLF1, CUS1, CWC2, CWC15, CWC21, CWC22, CWC23, CWC24, CWC25, CWC27, ECM2, HSH155, IST3, ISY1, LEA1, MSL1, NTC20, PRP8, PRP9, PRP11, PRP19, PRP21, PRP22, PRP45, PRP46, SLU7, SMB1, SMD1, SMD2, SMD3, SMX2, SMX3, SNT309, SNU114, SPP2, SYF1, SYF2, RSE1 and YJU2. Interacts with SLU7.

The protein resides in the nucleus. In terms of biological role, involved in pre-mRNA splicing. Facilitates the cooperative formation of U2/U6 helix II in association with stem II in the spliceosome. Binds to RNA. In Saccharomyces cerevisiae (strain ATCC 204508 / S288c) (Baker's yeast), this protein is Pre-mRNA-splicing factor SLT11 (ECM2).